The sequence spans 71 residues: Prokaryotic ubiquitin-like protein Pup (71 aa).

The segment at 1–30 (MPSASGHHQIPAETQRHDDDQTQETAQGLS) is disordered. Residues 23-56 (QETAQGLSAAAMLAQEQADDLDAILDDIETVLET) adopt a coiled-coil conformation. Positions 27 to 65 (QGLSAAAMLAQEQADDLDAILDDIETVLETNAEEYVSSF) are ARC ATPase binding. An Isoglutamyl lysine isopeptide (Glu-Lys) (interchain with K-? in acceptor proteins) cross-link involves residue Glu71.

Belongs to the prokaryotic ubiquitin-like protein family. In terms of assembly, strongly interacts with the proteasome-associated ATPase ARC through a hydrophobic interface; the interacting region of Pup lies in its C-terminal half. There is one Pup binding site per ARC hexamer ring.

It participates in protein degradation; proteasomal Pup-dependent pathway. Its function is as follows. Protein modifier that is covalently attached to lysine residues of substrate proteins, thereby targeting them for proteasomal degradation. The tagging system is termed pupylation. This is Prokaryotic ubiquitin-like protein Pup from Bifidobacterium animalis subsp. lactis (strain AD011).